The chain runs to 301 residues: Probable 5-dehydro-4-deoxyglucarate dehydratase (301 aa).

The protein belongs to the DapA family.

The catalysed reaction is 5-dehydro-4-deoxy-D-glucarate + H(+) = 2,5-dioxopentanoate + CO2 + H2O. Its pathway is carbohydrate acid metabolism; D-glucarate degradation; 2,5-dioxopentanoate from D-glucarate: step 2/2. The protein is Probable 5-dehydro-4-deoxyglucarate dehydratase of Cereibacter sphaeroides (strain ATCC 17029 / ATH 2.4.9) (Rhodobacter sphaeroides).